The chain runs to 488 residues: E3 ubiquitin-protein ligase RNF8 (488 aa).

One can recognise an FHA domain in the interval 38 to 92 (VTIGRGLSVTYQLISKVCPLMISRSHCVLKQNPEGQWTIMDNKSLNGVWLNRERL). The interval 68-72 (QNPEG) is required for interaction with PIWIL1. Residues 141–164 (DQRMEKHKGSRTKRKFSSPGLENL) form a disordered region. Over residues 145-156 (EKHKGSRTKRKF) the composition is skewed to basic residues. The residue at position 157 (serine 157) is a Phosphoserine. Residues 406–444 (CIICSEYFIEAVTLNCAHSFCSFCINEWMKRKVECPICR) form an RING-type zinc finger.

The protein belongs to the RNF8 family. In terms of assembly, homodimer. Forms a E2-E3 ubiquitin ligase complex composed of the RNF8 homodimer and a E2 heterodimer of UBE2N and UBE2V2. Interacts with class III E2s, including UBE2E1, UBE2E2, and UBE2E3 and with UBE2N. Interacts with RXRA. Interacts (via FHA domain) with ATM-phosphorylated MDC1. Interacts (via FHA domain) with 'Thr-4829' phosphorylated HERC2 (via C-terminus). Interacts with PIWIL1; leading to sequester RNF8 in the cytoplasm. Interacts with WRAP53/TCAB1. As to quaternary structure, (Microbial infection) May interact with the L.monocytogenes protein actA; however, given these errors in the sequence (AJ242721), the relevance of the interaction with actA remains to be confirmed. In terms of processing, autoubiquitinated through 'Lys-48' and 'Lys-63' of ubiquitin. 'Lys-63' polyubiquitination is mediated by UBE2N. 'Lys-29'-type polyubiquitination is also observed, but it doesn't require its own functional RING-type zinc finger.

Its subcellular location is the nucleus. It localises to the cytoplasm. The protein resides in the midbody. It is found in the chromosome. The protein localises to the telomere. The catalysed reaction is S-ubiquitinyl-[E2 ubiquitin-conjugating enzyme]-L-cysteine + [acceptor protein]-L-lysine = [E2 ubiquitin-conjugating enzyme]-L-cysteine + N(6)-ubiquitinyl-[acceptor protein]-L-lysine.. It participates in protein modification; protein ubiquitination. E3 ubiquitin-protein ligase that plays a key role in DNA damage signaling via 2 distinct roles: by mediating the 'Lys-63'-linked ubiquitination of histones H2A and H2AX and promoting the recruitment of DNA repair proteins at double-strand breaks (DSBs) sites, and by catalyzing 'Lys-48'-linked ubiquitination to remove target proteins from DNA damage sites. Following DNA DSBs, it is recruited to the sites of damage by ATM-phosphorylated MDC1 and catalyzes the 'Lys-63'-linked ubiquitination of histones H2A and H2AX, thereby promoting the formation of TP53BP1 and BRCA1 ionizing radiation-induced foci (IRIF). Also controls the recruitment of UIMC1-BRCC3 (RAP80-BRCC36) and PAXIP1/PTIP to DNA damage sites. Promotes the recruitment of NBN to DNA damage sites by catalyzing 'Lys-6'-linked ubiquitination of NBN. Also recruited at DNA interstrand cross-links (ICLs) sites and catalyzes 'Lys-63'-linked ubiquitination of histones H2A and H2AX, leading to recruitment of FAAP20 and Fanconi anemia (FA) complex, followed by interstrand cross-link repair. H2A ubiquitination also mediates the ATM-dependent transcriptional silencing at regions flanking DSBs in cis, a mechanism to avoid collision between transcription and repair intermediates. Promotes the formation of 'Lys-63'-linked polyubiquitin chains via interactions with the specific ubiquitin-conjugating UBE2N/UBC13 and ubiquitinates non-histone substrates such as PCNA. Substrates that are polyubiquitinated at 'Lys-63' are usually not targeted for degradation. Also catalyzes the formation of 'Lys-48'-linked polyubiquitin chains via interaction with the ubiquitin-conjugating UBE2L6/UBCH8, leading to degradation of substrate proteins such as CHEK2, JMJD2A/KDM4A and KU80/XRCC5: it is still unclear how the preference toward 'Lys-48'- versus 'Lys-63'-linked ubiquitination is regulated but it could be due to RNF8 ability to interact with specific E2 specific ligases. For instance, interaction with phosphorylated HERC2 promotes the association between RNF8 and UBE2N/UBC13 and favors the specific formation of 'Lys-63'-linked ubiquitin chains. Promotes non-homologous end joining (NHEJ) by promoting the 'Lys-48'-linked ubiquitination and degradation the of KU80/XRCC5. Following DNA damage, mediates the ubiquitination and degradation of JMJD2A/KDM4A in collaboration with RNF168, leading to unmask H4K20me2 mark and promote the recruitment of TP53BP1 at DNA damage sites. Following DNA damage, mediates the ubiquitination and degradation of POLD4/p12, a subunit of DNA polymerase delta. In the absence of POLD4, DNA polymerase delta complex exhibits higher proofreading activity. In addition to its function in damage signaling, also plays a role in higher-order chromatin structure by mediating extensive chromatin decondensation. Involved in the activation of ATM by promoting histone H2B ubiquitination, which indirectly triggers histone H4 'Lys-16' acetylation (H4K16ac), establishing a chromatin environment that promotes efficient activation of ATM kinase. Required in the testis, where it plays a role in the replacement of histones during spermatogenesis. At uncapped telomeres, promotes the joining of deprotected chromosome ends by inducing H2A ubiquitination and TP53BP1 recruitment, suggesting that it may enhance cancer development by aggravating telomere-induced genome instability in case of telomeric crisis. Promotes the assembly of RAD51 at DNA DSBs in the absence of BRCA1 and TP53BP1 Also involved in class switch recombination in immune system, via its role in regulation of DSBs repair. May be required for proper exit from mitosis after spindle checkpoint activation and may regulate cytokinesis. May play a role in the regulation of RXRA-mediated transcriptional activity. Not involved in RXRA ubiquitination by UBE2E2. In Mus musculus (Mouse), this protein is E3 ubiquitin-protein ligase RNF8.